The following is a 511-amino-acid chain: GATA zinc finger domain-containing protein 15 (511 aa).

Positions 1 to 111 (TNNNNFNNIN…FNDNCNNNSN (111 aa)) are enriched in low complexity. Disordered stretches follow at residues 1-194 (TNNN…NTFF), 214-313 (NVNN…NENK), and 325-355 (NLQYSPPPFQLDSGSTTPKTPSAPTSPVLSP). Polar residues predominate over residues 124 to 135 (SLQNINQYPLSP). The segment covering 136 to 166 (NNNKSSNQHLSHSSSNVNSQYYQTPYYQPSQ) has biased composition (low complexity). The segment covering 167-185 (KQNSPNSTPPLNGCQYENH) has biased composition (polar residues). Low complexity-rich tracts occupy residues 214 to 309 (NVNN…NNDN) and 337 to 351 (SGSTTPKTPSAPTSP). The GATA-type zinc finger occupies 453–478 (CQACGTRASPEWRKGPDGFKSLCNAC).

This Dictyostelium discoideum (Social amoeba) protein is GATA zinc finger domain-containing protein 15 (gtaO).